A 297-amino-acid polypeptide reads, in one-letter code: Protein MIZU-KUSSEI 1 (297 aa).

As to expression, expressed in root meristematic region, cortical cells, lateral root cap cells, columella cells of the root cap, mature region of the roots and leaf hydathodes.

The protein localises to the endoplasmic reticulum membrane. In terms of biological role, plays a role in lateral root development by maintaining auxin levels. This function requires GNOM (GN/MIZ2) activity. Negatively regulates cytokinin sensitivity on root development. Positively regulates hydrotropism in roots. This is Protein MIZU-KUSSEI 1 (MIZ1) from Arabidopsis thaliana (Mouse-ear cress).